Here is a 666-residue protein sequence, read N- to C-terminus: Long chain acyl-CoA synthetase 5 (666 aa).

Position 228 to 239 (228 to 239) interacts with ATP; that stretch reads IMYTSGTTGDPK. The tract at residues 495–519 is fatty acid-binding; that stretch reads DGWLHTGDVGEWQPNGSMKIIDRKK.

This sequence belongs to the ATP-dependent AMP-binding enzyme family. Mg(2+) is required as a cofactor.

The catalysed reaction is a long-chain fatty acid + ATP + CoA = a long-chain fatty acyl-CoA + AMP + diphosphate. It functions in the pathway lipid metabolism; fatty acid metabolism. In terms of biological role, activation of long-chain fatty acids for both synthesis of cellular lipids, and degradation via beta-oxidation. Preferentially uses palmitate, palmitoleate, oleate and linoleate. The polypeptide is Long chain acyl-CoA synthetase 5 (LACS5) (Arabidopsis thaliana (Mouse-ear cress)).